The following is a 267-amino-acid chain: 14-3-3-like protein GF14 chi (267 aa).

An N-acetylalanine modification is found at A2. S72 and S195 each carry phosphoserine. A Phosphothreonine modification is found at T216. S267 bears the Phosphoserine mark.

It belongs to the 14-3-3 family. Interacts with TPK1. Interacts with the isocitrate dehydrogenase IDH3, and malate dehydrogenases MDH1 and MDH2. Interacts with DREB1A and DREB1B in the nucleus. Interacts with CINV1.

The protein resides in the nucleus. It is found in the cytoplasm. Is associated with a DNA binding complex that binds to the G box, a well-characterized cis-acting DNA regulatory element found in plant genes. Involved in the regulation of nutrient metabolism. In Arabidopsis thaliana (Mouse-ear cress), this protein is 14-3-3-like protein GF14 chi (GRF1).